A 338-amino-acid polypeptide reads, in one-letter code: Ketol-acid reductoisomerase (NADP(+)) (338 aa).

In terms of domain architecture, KARI N-terminal Rossmann spans 1–181 (MKVYYDKDAD…GGGRTGIIET (181 aa)). Residues 24 to 27 (YGSQ), arginine 47, serine 50, serine 52, and 82 to 85 (DEFQ) each bind NADP(+). The active site involves histidine 107. Glycine 133 is a binding site for NADP(+). One can recognise a KARI C-terminal knotted domain in the interval 182–327 (TFKDETETDL…AKLRSMMPWI (146 aa)). Positions 190, 194, 226, and 230 each coordinate Mg(2+). Residue serine 251 coordinates substrate.

This sequence belongs to the ketol-acid reductoisomerase family. Mg(2+) serves as cofactor.

It carries out the reaction (2R)-2,3-dihydroxy-3-methylbutanoate + NADP(+) = (2S)-2-acetolactate + NADPH + H(+). The enzyme catalyses (2R,3R)-2,3-dihydroxy-3-methylpentanoate + NADP(+) = (S)-2-ethyl-2-hydroxy-3-oxobutanoate + NADPH + H(+). The protein operates within amino-acid biosynthesis; L-isoleucine biosynthesis; L-isoleucine from 2-oxobutanoate: step 2/4. It functions in the pathway amino-acid biosynthesis; L-valine biosynthesis; L-valine from pyruvate: step 2/4. In terms of biological role, involved in the biosynthesis of branched-chain amino acids (BCAA). Catalyzes an alkyl-migration followed by a ketol-acid reduction of (S)-2-acetolactate (S2AL) to yield (R)-2,3-dihydroxy-isovalerate. In the isomerase reaction, S2AL is rearranged via a Mg-dependent methyl migration to produce 3-hydroxy-3-methyl-2-ketobutyrate (HMKB). In the reductase reaction, this 2-ketoacid undergoes a metal-dependent reduction by NADPH to yield (R)-2,3-dihydroxy-isovalerate. The protein is Ketol-acid reductoisomerase (NADP(+)) of Thiobacillus denitrificans (strain ATCC 25259 / T1).